The following is a 384-amino-acid chain: BarH-like 2 homeobox protein (384 aa).

Disordered stretches follow at residues 1–134, 154–235, and 364–384; these read MTAM…APRT, CAPY…ARTA, and PGGQ…PHPR. 2 stretches are compositionally biased toward low complexity: residues 101-110 and 119-134; these read VPAQSLQPSP and QSAA…APRT. The span at 157-175 shows a compositional bias: polar residues; that stretch reads YSTSVSSPHHTPKQESNAA. Over residues 177–217 the composition is skewed to basic and acidic residues; it reads ESFRPKLEQEDGKTKLDKREDPQSDIKCHGTKEEGDREITS. Positions 229–288 form a DNA-binding region, homeobox; the sequence is PRKARTAFSDHQLNQLERSFERQKYLSVQDRMDLAAALNLTDTQVKTWYQNRRTKWKRQT.

It belongs to the BAR homeobox family.

The protein localises to the nucleus. In terms of biological role, potential regulator of neural basic helix-loop-helix genes. It may down-regulate expression of ASCL1 and, within the thalamus, up-regulate NGN2, thereby regulating distinct patterns of neuronal differentiation. This is BarH-like 2 homeobox protein (Barhl2) from Mus musculus (Mouse).